The primary structure comprises 228 residues: PKHD-type hydroxylase xcc-b100_1388 (228 aa).

A Fe2OG dioxygenase domain is found at 78–180 (RIYPPLFNRY…RVASFFWIQS (103 aa)). The Fe cation site is built by H96, D98, and H161. R171 contacts 2-oxoglutarate.

Fe(2+) is required as a cofactor. The cofactor is L-ascorbate.

This Xanthomonas campestris pv. campestris (strain B100) protein is PKHD-type hydroxylase xcc-b100_1388.